Here is a 174-residue protein sequence, read N- to C-terminus: Nicotinamide-nucleotide adenylyltransferase (174 aa).

It belongs to the archaeal NMN adenylyltransferase family.

Its subcellular location is the cytoplasm. It catalyses the reaction beta-nicotinamide D-ribonucleotide + ATP + H(+) = diphosphate + NAD(+). Its pathway is cofactor biosynthesis; NAD(+) biosynthesis; NAD(+) from nicotinamide D-ribonucleotide: step 1/1. This is Nicotinamide-nucleotide adenylyltransferase from Archaeoglobus fulgidus (strain ATCC 49558 / DSM 4304 / JCM 9628 / NBRC 100126 / VC-16).